We begin with the raw amino-acid sequence, 393 residues long: NAD(P)H-quinone oxidoreductase subunit H, chloroplastic (393 aa).

The protein belongs to the complex I 49 kDa subunit family. As to quaternary structure, NDH is composed of at least 16 different subunits, 5 of which are encoded in the nucleus.

Its subcellular location is the plastid. The protein localises to the chloroplast thylakoid membrane. The catalysed reaction is a plastoquinone + NADH + (n+1) H(+)(in) = a plastoquinol + NAD(+) + n H(+)(out). It catalyses the reaction a plastoquinone + NADPH + (n+1) H(+)(in) = a plastoquinol + NADP(+) + n H(+)(out). In terms of biological role, NDH shuttles electrons from NAD(P)H:plastoquinone, via FMN and iron-sulfur (Fe-S) centers, to quinones in the photosynthetic chain and possibly in a chloroplast respiratory chain. The immediate electron acceptor for the enzyme in this species is believed to be plastoquinone. Couples the redox reaction to proton translocation, and thus conserves the redox energy in a proton gradient. This Brachypodium distachyon (Purple false brome) protein is NAD(P)H-quinone oxidoreductase subunit H, chloroplastic.